A 185-amino-acid polypeptide reads, in one-letter code: Meiotic recombination protein REC104 (185 aa).

Residues 146-168 are disordered; it reads ANETRPLSSSSTPQILQSDYSVV.

In terms of biological role, potential transcriptional regulator that is required to activate expression of a number of early meiotic genes including HOP1. This chain is Meiotic recombination protein REC104 (REC104), found in Saccharomyces pastorianus (Lager yeast).